We begin with the raw amino-acid sequence, 343 residues long: MDENRKKALSAALGQIERQFGKGAVMRMGDSTAVRDVEAISTGSLALDIALGIGGLPKGRVVEIYGPESSGKTTLTLQVIAECQKQGGTAAFVDAEHALDPGYAEKLGVNVDDLLVSQPDTGEQALEIADMLVRSGAVDVVVVDSVAALTPKAEIEGEMGDAHVGLQARLMSQALRKLTANIKRSNTLVIFINQIRMKIGVMFGNPETTTGGNALKFYASVRLDIRRTGAIKKGDEVIGNETRVKVVKNKVAPPFKQAEFEILYGEGISRLGEVIDIGVQDGIVDKSGAWYSYNGERIGQGKDNARTFLKEHPEMAGEIERQIREKHLPKRSAKADEAESAEA.

Position 66 to 73 (66 to 73 (GPESSGKT)) interacts with ATP. Residues 319 to 343 (IERQIREKHLPKRSAKADEAESAEA) form a disordered region.

This sequence belongs to the RecA family.

It is found in the cytoplasm. Functionally, can catalyze the hydrolysis of ATP in the presence of single-stranded DNA, the ATP-dependent uptake of single-stranded DNA by duplex DNA, and the ATP-dependent hybridization of homologous single-stranded DNAs. It interacts with LexA causing its activation and leading to its autocatalytic cleavage. This chain is Protein RecA, found in Thioalkalivibrio sulfidiphilus (strain HL-EbGR7).